Consider the following 484-residue polypeptide: Threonine synthase-like 2 (484 aa).

Lysine 113 carries the post-translational modification N6-(pyridoxal phosphate)lysine.

It belongs to the threonine synthase family. It depends on pyridoxal 5'-phosphate as a cofactor.

Its function is as follows. Acts as a catabolic phospho-lyase on both gamma- and beta-phosphorylated substrates. Degrades O-phospho-threonine (PThr) to alpha-ketobutyrate, ammonia and phosphate. The polypeptide is Threonine synthase-like 2 (THNSL2) (Pongo abelii (Sumatran orangutan)).